The sequence spans 550 residues: Mitochondrial distribution and morphology protein 12 (550 aa).

The SMP-LTD domain occupies 1-550 (MSIDLNWETV…VYPSYWTFLV (550 aa)). 3 disordered regions span residues 76 to 97 (SDLA…DRRR), 196 to 386 (GHGH…KLRE), and 466 to 489 (ENEV…GGNG). Acidic residues predominate over residues 83–92 (GSEEDEEEIA). Residues 270-286 (PPFPPSSTGGPSPPPGL) are compositionally biased toward pro residues. Positions 288-305 (KPHHPHHPHHHHAHHAHP) are enriched in basic residues. Positions 327–344 (PTRDKTTPSHHPDPEDVH) are enriched in basic and acidic residues. Residues 346–355 (PNTTTTNKQR) show a composition bias toward polar residues. Residues 356–371 (STSPATSSPLATSAQE) show a composition bias toward low complexity.

Belongs to the MDM12 family. As to quaternary structure, component of the ER-mitochondria encounter structure (ERMES) or MDM complex, composed of MMM1, MDM10, MDM12 and MDM34. An MMM1 homodimer associates with one molecule of MDM12 on each side in a pairwise head-to-tail manner, and the SMP-LTD domains of MMM1 and MDM12 generate a continuous hydrophobic tunnel for phospholipid trafficking.

It localises to the mitochondrion outer membrane. The protein resides in the endoplasmic reticulum membrane. In terms of biological role, component of the ERMES/MDM complex, which serves as a molecular tether to connect the endoplasmic reticulum (ER) and mitochondria. Components of this complex are involved in the control of mitochondrial shape and protein biogenesis, and function in nonvesicular lipid trafficking between the ER and mitochondria. MDM12 is required for the interaction of the ER-resident membrane protein MMM1 and the outer mitochondrial membrane-resident beta-barrel protein MDM10. The MDM12-MMM1 subcomplex functions in the major beta-barrel assembly pathway that is responsible for biogenesis of all mitochondrial outer membrane beta-barrel proteins, and acts in a late step after the SAM complex. The MDM10-MDM12-MMM1 subcomplex further acts in the TOM40-specific pathway after the action of the MDM12-MMM1 complex. Essential for establishing and maintaining the structure of mitochondria and maintenance of mtDNA nucleoids. This Podospora anserina (strain S / ATCC MYA-4624 / DSM 980 / FGSC 10383) (Pleurage anserina) protein is Mitochondrial distribution and morphology protein 12.